Here is a 348-residue protein sequence, read N- to C-terminus: A-type ATP synthase subunit C (348 aa).

The protein belongs to the V-ATPase V0D/AC39 subunit family. In terms of assembly, has multiple subunits with at least A(3), B(3), C, D, E, F, H, I and proteolipid K(x).

It localises to the cell membrane. Functionally, component of the A-type ATP synthase that produces ATP from ADP in the presence of a proton gradient across the membrane. The protein is A-type ATP synthase subunit C of Haloferax volcanii (strain ATCC 29605 / DSM 3757 / JCM 8879 / NBRC 14742 / NCIMB 2012 / VKM B-1768 / DS2) (Halobacterium volcanii).